A 537-amino-acid polypeptide reads, in one-letter code: Phosphoenolpyruvate carboxykinase (ATP) (537 aa).

The substrate site is built by Arg61, Tyr194, and Lys200. ATP contacts are provided by residues Lys200, His219, and 235 to 243 (GLSGTGKTT). 2 residues coordinate Mn(2+): Lys200 and His219. Asp256 is a binding site for Mn(2+). Positions 284, 322, and 448 each coordinate ATP. A substrate-binding site is contributed by Arg322.

Belongs to the phosphoenolpyruvate carboxykinase (ATP) family. The cofactor is Mn(2+).

Its subcellular location is the cytoplasm. The enzyme catalyses oxaloacetate + ATP = phosphoenolpyruvate + ADP + CO2. It participates in carbohydrate biosynthesis; gluconeogenesis. Its function is as follows. Involved in the gluconeogenesis. Catalyzes the conversion of oxaloacetate (OAA) to phosphoenolpyruvate (PEP) through direct phosphoryl transfer between the nucleoside triphosphate and OAA. The chain is Phosphoenolpyruvate carboxykinase (ATP) from Bradyrhizobium sp. (strain BTAi1 / ATCC BAA-1182).